The sequence spans 316 residues: Golgi to ER traffic protein 2 (316 aa).

The interval 1–75 (MATELSDAEK…SDEEVEKSTK (75 aa)) is disordered. Topologically, residues 1–167 (MATELSDAEK…LKYYKFKVSK (167 aa)) are cytoplasmic. Over residues 7-19 (DAEKRKLLRERRQ) the composition is skewed to basic and acidic residues. 2 stretches are compositionally biased toward polar residues: residues 22 to 48 (FSNG…STSV) and 56 to 65 (PSGNKKSSNV). The chain crosses the membrane as a helical span at residues 168–187 (LKSYIILIKWALLAPYVYFI). The Lumenal segment spans residues 188 to 209 (MHPNPTVLQASNLLSQIVERSN). The helical transmembrane segment at 210 to 229 (FFSIFTGLEIVFISIYYQML) threads the bilayer. Residues 230–276 (KKLQRDNNVTATQNAGGILKYLTMIPEGILPIRNIQGKIGLALEYFD) lie on the Cytoplasmic side of the membrane. Residues 277-297 (VASMYVTDICFVLVLFGVMKY) traverse the membrane as a helical segment. Over 298-316 (YHSSFPISVPIEPPIAGIQ) the chain is Lumenal.

This sequence belongs to the GET2 family. In terms of assembly, component of the Golgi to ER traffic (GET) complex, which is composed of GET1, GET2 and GET3. Within the complex, GET1 and GET2 form a heterotetramer which is stabilized by phosphatidylinositol binding and which binds to the GET3 homodimer.

It localises to the endoplasmic reticulum membrane. The protein resides in the golgi apparatus membrane. Required for the post-translational delivery of tail-anchored (TA) proteins to the endoplasmic reticulum. Together with GET1, acts as a membrane receptor for soluble GET3, which recognizes and selectively binds the transmembrane domain of TA proteins in the cytosol. The GET complex cooperates with the HDEL receptor ERD2 to mediate the ATP-dependent retrieval of resident ER proteins that contain a C-terminal H-D-E-L retention signal from the Golgi to the ER. This chain is Golgi to ER traffic protein 2, found in Kluyveromyces lactis (strain ATCC 8585 / CBS 2359 / DSM 70799 / NBRC 1267 / NRRL Y-1140 / WM37) (Yeast).